The sequence spans 324 residues: Polyprenol dehydrogenase (324 aa).

The active-site Proton acceptor is Y206. Y206, K210, and T243 together coordinate NAD(+).

The protein belongs to the short-chain dehydrogenases/reductases (SDR) family.

The protein localises to the lipid droplet. The enzyme catalyses a di-trans,poly-cis-polyprenol + NAD(+) = a di-trans,poly-cis-polyprenal + NADH + H(+). It catalyses the reaction a di-trans,poly-cis-polyprenol + NADP(+) = a di-trans,poly-cis-polyprenal + NADPH + H(+). It carries out the reaction a di-trans,poly-cis-dolichol + NADP(+) = a di-trans,poly-cis-dolichal + NADPH + H(+). The catalysed reaction is a di-trans,poly-cis-dolichol + NAD(+) = a di-trans,poly-cis-dolichal + NADH + H(+). The protein operates within protein modification; protein glycosylation. Its function is as follows. Oxidoreductase that plays a key role in early steps of protein N-linked glycosylation by mediating two non-consecutive steps in dolichol biosynthesis. Acts both as a NAD(+)-dependent dehydrogenase and as a NADPH-dependent reductase during the conversion of polyprenol into dolichol. First catalyzes the NAD(+)-dependent dehydrogenation of polyprenol into polyprenal; polyprenal is then reduced into dolichal by srd5a3. It then catalyzes the NADPH-dependent reduction of dolichal into dolichol. The chain is Polyprenol dehydrogenase from Danio rerio (Zebrafish).